The sequence spans 382 residues: MSQPELKKSKVDISKTITVLPGDHVGEEVCNEAIKVLQAIEDATPYRNIKFNLQKHLIGGAAIDATGTPLPDESLEAAKNSDAVLLGAVGGPKWGTGSVRPEQGLLKIRKELNLYANLRPCNFASDSLLELSPLKSEIVKGTDFTVVRELVGGIYFGERQEQAESEDKQTAWDTEKYSTEEVTRITRMAAFMALQHNPPLPIWSLDKANVLASSRLWRTTVDKVMSEEFPQLTIQHQLIDSAAMILVQSPTKLNGIIITSNMFGDIISDEASVIPGSLGLLPSASLASLPDTNSAFGLYEPCHGSAPDLTENKVNPVATILSVAMMLRLSLDCVPEAEALEKAVGQVLDSGIRTGDLRGSSSTKEVGDAIAEAVKKVLNQSV.

91–102 (GPKWGTGSVRPE) is a binding site for NAD(+). Residues Arg109, Arg119, Arg148, and Asp240 each coordinate substrate. Mg(2+)-binding residues include Asp240, Asp265, and Asp269. 304-315 (GSAPDLTENKVN) provides a ligand contact to NAD(+).

The protein belongs to the isocitrate and isopropylmalate dehydrogenases family. As to quaternary structure, homodimer. Mg(2+) serves as cofactor. Mn(2+) is required as a cofactor.

The protein resides in the cytoplasm. The catalysed reaction is (2R,3S)-3-isopropylmalate + NAD(+) = 4-methyl-2-oxopentanoate + CO2 + NADH. Its pathway is amino-acid biosynthesis; L-leucine biosynthesis; L-leucine from 3-methyl-2-oxobutanoate: step 3/4. In terms of biological role, catalyzes the oxidation of 3-carboxy-2-hydroxy-4-methylpentanoate (3-isopropylmalate) to 3-carboxy-4-methyl-2-oxopentanoate. The product decarboxylates to 4-methyl-2 oxopentanoate. This Debaryomyces hansenii (strain ATCC 36239 / CBS 767 / BCRC 21394 / JCM 1990 / NBRC 0083 / IGC 2968) (Yeast) protein is 3-isopropylmalate dehydrogenase (LEU2).